We begin with the raw amino-acid sequence, 447 residues long: Phosphoglucosamine mutase (447 aa).

Catalysis depends on serine 108, which acts as the Phosphoserine intermediate. Mg(2+) is bound by residues serine 108, aspartate 247, aspartate 249, and aspartate 251. Serine 108 carries the post-translational modification Phosphoserine.

This sequence belongs to the phosphohexose mutase family. It depends on Mg(2+) as a cofactor. Activated by phosphorylation.

It catalyses the reaction alpha-D-glucosamine 1-phosphate = D-glucosamine 6-phosphate. Its function is as follows. Catalyzes the conversion of glucosamine-6-phosphate to glucosamine-1-phosphate. This is Phosphoglucosamine mutase from Bordetella petrii (strain ATCC BAA-461 / DSM 12804 / CCUG 43448).